A 524-amino-acid chain; its full sequence is RNA-splicing ligase RtcB homolog 1 (524 aa).

Residues Asp-141, Cys-144, His-249, His-281, and His-372 each contribute to the Mn(2+) site. Asn-248–Glu-252 serves as a coordination point for GMP. Residues His-372–Asn-373, Gly-421–Met-424, Ser-428, His-447–Gly-450, and Lys-523 contribute to the GMP site. His-447 functions as the GMP-histidine intermediate in the catalytic mechanism.

Belongs to the RtcB family. As to quaternary structure, catalytic component of the tRNA-splicing ligase complex. Mn(2+) is required as a cofactor.

The enzyme catalyses a 3'-end 3'-phospho-ribonucleotide-RNA + a 5'-end dephospho-ribonucleoside-RNA + GTP = a ribonucleotidyl-ribonucleotide-RNA + GMP + diphosphate. It carries out the reaction a 3'-end 2',3'-cyclophospho-ribonucleotide-RNA + a 5'-end dephospho-ribonucleoside-RNA + GTP + H2O = a ribonucleotidyl-ribonucleotide-RNA + GMP + diphosphate + H(+). In terms of biological role, catalytic subunit of the tRNA-splicing ligase complex that acts by directly joining spliced tRNA halves to mature-sized tRNAs by incorporating the precursor-derived splice junction phosphate into the mature tRNA as a canonical 3',5'-phosphodiester. May act as an RNA ligase with broad substrate specificity, and may function toward other RNAs. This is RNA-splicing ligase RtcB homolog 1 from Entamoeba histolytica (strain ATCC 30459 / HM-1:IMSS / ABRM).